Here is a 1504-residue protein sequence, read N- to C-terminus: DNA polymerase zeta catalytic subunit (1504 aa).

Zn(2+) contacts are provided by C1398, C1401, C1414, and C1417. Residues 1398–1417 (CCNCGEELTKICSLQLCDDC) form a CysA-type zinc finger. [4Fe-4S] cluster contacts are provided by C1446, C1449, C1468, and C1473. The CysB motif motif lies at 1446 to 1473 (CRTCSYRYTSDAGIENDHIASKCNSYDC).

The protein belongs to the DNA polymerase type-B family. Forms DNA polymerase zeta with REV7. [4Fe-4S] cluster is required as a cofactor.

Its subcellular location is the mitochondrion. The protein resides in the nucleus. The catalysed reaction is DNA(n) + a 2'-deoxyribonucleoside 5'-triphosphate = DNA(n+1) + diphosphate. Its function is as follows. Nonessential DNA polymerase. Required for DNA damage induced mutagenesis. Involved in DNA repair, mitochondrial DNA repair and translesion synthesis. Translesion synthesis in S.cerevisiae may use a specialized DNA polymerase that is not required for other DNA replicative processes. Has a role in the bypass of abasic (AP) sites. Highly inefficient in incorporating nucleotides opposite the AP site, but efficiently extends from nucleotides, particularly an A, inserted opposite the lesion. In Saccharomyces cerevisiae (strain ATCC 204508 / S288c) (Baker's yeast), this protein is DNA polymerase zeta catalytic subunit (REV3).